We begin with the raw amino-acid sequence, 563 residues long: Beta-catenin-like protein 1 (563 aa).

N-acetylmethionine is present on Met-1. The disordered stretch occupies residues 1 to 81 (MDVGELLSYQ…EEEEPLDESS (81 aa)). The Nuclear localization signal signature appears at 16-33 (KRPRDDEEEELKTRRKQT). Over residues 34 to 45 (GPRERGRYREDE) the composition is skewed to basic and acidic residues. The segment covering 66–78 (DGEEEEEEEEPLD) has biased composition (acidic residues). HEAT repeat units lie at residues 79 to 129 (ESSV…VVAT) and 134 to 176 (YHLL…TLHE). The residue at position 91 (Lys-91) is an N6-acetyllysine. A Nuclear export signal (NES) motif is present at residues 130 to 140 (MPDLYHLLVEL). ARM repeat units follow at residues 178-228 (EEGA…MAEF), 229-273 (RPEM…LQDN), 274-323 (DENR…CLML), 325-363 (SNRE…AMIG), and 364-417 (PEGA…LLRN). Ser-389 is modified (phosphoserine). A coiled-coil region spans residues 476–540 (DMEDEFYLRR…HIIKEYAENI (65 aa)). Ser-545 is subject to Phosphoserine.

Component of the PRP19-CDC5L splicing complex composed of a core complex comprising a homotetramer of PRPF19, CDC5L, PLRG1 and BCAS2, and at least three less stably associated proteins CTNNBL1, CWC15 and HSPA8. Interacts directly with CWC15 and CDC5L in the complex. Interacts with AICDA; the interaction is important for the antibody diversification activity of AICDA. Interacts with PRPF31 (via its NLS). Interacts (via its N-terminal NLS) with KPNA1 and KPNA2.

The protein resides in the nucleus. Its function is as follows. Component of the PRP19-CDC5L complex that forms an integral part of the spliceosome and is required for activating pre-mRNA splicing. Participates in AID/AICDA-mediated somatic hypermutation (SHM) and class-switch recombination (CSR), 2 processes resulting in the production of high-affinity, mutated isotype-switched antibodies. The protein is Beta-catenin-like protein 1 (Ctnnbl1) of Rattus norvegicus (Rat).